The sequence spans 484 residues: Pentatricopeptide repeat-containing protein At1g09190 (484 aa).

10 PPR repeats span residues Asn-66–Ala-100, Asp-101–Arg-135, Leu-136–Arg-166, Asn-167–Arg-197, Ser-198–Pro-232, Asp-233–Lys-267, Phe-269–Arg-299, Asn-300–Ala-334, Asn-336–Arg-366, and Arg-372–Ala-406. Residues Met-407 to Val-482 are type E motif.

Belongs to the PPR family. PCMP-E subfamily.

The sequence is that of Pentatricopeptide repeat-containing protein At1g09190 (PCMP-E70) from Arabidopsis thaliana (Mouse-ear cress).